The following is a 532-amino-acid chain: Probable bifunctional tRNA threonylcarbamoyladenosine biosynthesis protein (532 aa).

A kae1 region spans residues 1-323 (MRVLGVEGTA…FRPDEVSVTW (323 aa)). Fe cation is bound by residues H107 and H111. Residues 128 to 132 (NASGA), D160, G173, E177, and N256 contribute to the L-threonylcarbamoyladenylate site. D284 contributes to the Fe cation binding site. One can recognise a Protein kinase domain in the interval 329 to 532 (PARDPGADAV…GRYQDDPETA (204 aa)). ATP contacts are provided by residues 338–346 (VRQGAEATV) and K355. Residue D444 is the Proton acceptor; for kinase activity of the active site.

It in the N-terminal section; belongs to the KAE1 / TsaD family. This sequence in the C-terminal section; belongs to the protein kinase superfamily. Tyr protein kinase family. BUD32 subfamily. As to quaternary structure, component of the KEOPS complex that consists of Kae1, Bud32, Cgi121 and Pcc1; the whole complex dimerizes. The cofactor is Fe(2+).

The protein localises to the cytoplasm. The enzyme catalyses L-seryl-[protein] + ATP = O-phospho-L-seryl-[protein] + ADP + H(+). It carries out the reaction L-threonyl-[protein] + ATP = O-phospho-L-threonyl-[protein] + ADP + H(+). It catalyses the reaction L-threonylcarbamoyladenylate + adenosine(37) in tRNA = N(6)-L-threonylcarbamoyladenosine(37) in tRNA + AMP + H(+). Required for the formation of a threonylcarbamoyl group on adenosine at position 37 (t(6)A37) in tRNAs that read codons beginning with adenine. Is a component of the KEOPS complex that is probably involved in the transfer of the threonylcarbamoyl moiety of threonylcarbamoyl-AMP (TC-AMP) to the N6 group of A37. The Kae1 domain likely plays a direct catalytic role in this reaction. The Bud32 domain probably displays kinase activity that regulates Kae1 function. This is Probable bifunctional tRNA threonylcarbamoyladenosine biosynthesis protein from Halobacterium salinarum (strain ATCC 700922 / JCM 11081 / NRC-1) (Halobacterium halobium).